The sequence spans 875 residues: Valine--tRNA ligase (875 aa).

A 'HIGH' region motif is present at residues 44–54; it reads PNVTGKLHLGH. The 'KMSKS' region motif lies at 520–524; it reads KMSKS. Residue K523 participates in ATP binding. Residues 804–875 are a coiled coil; the sequence is LEGLINIEEE…VRARLAQLKQ (72 aa).

It belongs to the class-I aminoacyl-tRNA synthetase family. ValS type 1 subfamily. As to quaternary structure, monomer.

It localises to the cytoplasm. The enzyme catalyses tRNA(Val) + L-valine + ATP = L-valyl-tRNA(Val) + AMP + diphosphate. Its function is as follows. Catalyzes the attachment of valine to tRNA(Val). As ValRS can inadvertently accommodate and process structurally similar amino acids such as threonine, to avoid such errors, it has a 'posttransfer' editing activity that hydrolyzes mischarged Thr-tRNA(Val) in a tRNA-dependent manner. This is Valine--tRNA ligase from Anoxybacillus flavithermus (strain DSM 21510 / WK1).